The primary structure comprises 380 residues: Succinyl-diaminopimelate desuccinylase (380 aa).

H69 provides a ligand contact to Zn(2+). D71 is an active-site residue. Residue D102 coordinates Zn(2+). The active-site Proton acceptor is E135. Zn(2+) is bound by residues E136, E164, and H353.

The protein belongs to the peptidase M20A family. DapE subfamily. As to quaternary structure, homodimer. The cofactor is Zn(2+). Requires Co(2+) as cofactor.

The enzyme catalyses N-succinyl-(2S,6S)-2,6-diaminopimelate + H2O = (2S,6S)-2,6-diaminopimelate + succinate. The protein operates within amino-acid biosynthesis; L-lysine biosynthesis via DAP pathway; LL-2,6-diaminopimelate from (S)-tetrahydrodipicolinate (succinylase route): step 3/3. Catalyzes the hydrolysis of N-succinyl-L,L-diaminopimelic acid (SDAP), forming succinate and LL-2,6-diaminopimelate (DAP), an intermediate involved in the bacterial biosynthesis of lysine and meso-diaminopimelic acid, an essential component of bacterial cell walls. The protein is Succinyl-diaminopimelate desuccinylase of Ruegeria pomeroyi (strain ATCC 700808 / DSM 15171 / DSS-3) (Silicibacter pomeroyi).